A 311-amino-acid chain; its full sequence is Olfactory receptor 10G9 (311 aa).

The Extracellular segment spans residues 1-23 (MSKTSLVTAFILTGLPHAPGLDA). A helical membrane pass occupies residues 24–44 (PLFGIFLVVYVLTVLGNLLIL). The Cytoplasmic portion of the chain corresponds to 45–52 (LVIRVDSH). The chain crosses the membrane as a helical span at residues 53-73 (LHTPMYYFLTNLSFIDMWFST). The Extracellular portion of the chain corresponds to 74–98 (VTVPKMLMTLVSPSGRAISFHSCVA). Cysteines 96 and 188 form a disulfide. The chain crosses the membrane as a helical span at residues 99–119 (QLYFFHFLGSTECFLYTVMSY). Residues 120 to 138 (DRYLAISYPLRYTSMMSGS) lie on the Cytoplasmic side of the membrane. A helical transmembrane segment spans residues 139 to 159 (RCALLATSTWLSGSLHSAVQT). The Extracellular segment spans residues 160–196 (ILTFHLPYCGPNQIQHYLCDAPPILKLACADTSANEM). A helical transmembrane segment spans residues 197 to 216 (VIFVDIGLVASGCFLLIVLS). At 217 to 236 (YVSIVCSILRIHTSEGRHRA) the chain is on the cytoplasmic side. The chain crosses the membrane as a helical span at residues 237–257 (FQTCASHCIVVLCFFVPCVFI). The Extracellular portion of the chain corresponds to 258 to 268 (YLRPGSRDVVD). A helical membrane pass occupies residues 269–289 (GVVAIFYTVLTPLLNPVVYTL). The Cytoplasmic segment spans residues 290–311 (RNKEVKKAVLKLRDKVAHSQGE).

It belongs to the G-protein coupled receptor 1 family.

The protein localises to the cell membrane. Functionally, odorant receptor. This chain is Olfactory receptor 10G9 (OR10G9), found in Homo sapiens (Human).